The sequence spans 266 residues: Glucosamine-6-phosphate deaminase (266 aa).

Aspartate 72 serves as the catalytic Proton acceptor; for enolization step. Residue aspartate 141 is the For ring-opening step of the active site. The active-site Proton acceptor; for ring-opening step is the histidine 143. Glutamate 148 functions as the For ring-opening step in the catalytic mechanism.

Belongs to the glucosamine/galactosamine-6-phosphate isomerase family. NagB subfamily. Homohexamer.

The enzyme catalyses alpha-D-glucosamine 6-phosphate + H2O = beta-D-fructose 6-phosphate + NH4(+). Its pathway is amino-sugar metabolism; N-acetylneuraminate degradation; D-fructose 6-phosphate from N-acetylneuraminate: step 5/5. Allosterically activated by N-acetylglucosamine 6-phosphate (GlcNAc6P). Functionally, catalyzes the reversible isomerization-deamination of glucosamine 6-phosphate (GlcN6P) to form fructose 6-phosphate (Fru6P) and ammonium ion. This is Glucosamine-6-phosphate deaminase from Citrobacter koseri (strain ATCC BAA-895 / CDC 4225-83 / SGSC4696).